An 88-amino-acid chain; its full sequence is Small ribosomal subunit protein uS15 (88 aa).

This sequence belongs to the universal ribosomal protein uS15 family. Part of the 30S ribosomal subunit. Forms a bridge to the 50S subunit in the 70S ribosome, contacting the 23S rRNA.

Its function is as follows. One of the primary rRNA binding proteins, it binds directly to 16S rRNA where it helps nucleate assembly of the platform of the 30S subunit by binding and bridging several RNA helices of the 16S rRNA. In terms of biological role, forms an intersubunit bridge (bridge B4) with the 23S rRNA of the 50S subunit in the ribosome. This chain is Small ribosomal subunit protein uS15, found in Geobacter sulfurreducens (strain ATCC 51573 / DSM 12127 / PCA).